Consider the following 246-residue polypeptide: Ubiquitin-conjugating enzyme E2 6 (246 aa).

Topologically, residues Met-1–Asn-224 are cytoplasmic. The UBC core domain occupies Gln-5–Phe-154. Cys-87 functions as the Glycyl thioester intermediate in the catalytic mechanism. A helical transmembrane segment spans residues Gly-225 to Met-245.

It belongs to the ubiquitin-conjugating enzyme family.

It localises to the endoplasmic reticulum membrane. The catalysed reaction is S-ubiquitinyl-[E1 ubiquitin-activating enzyme]-L-cysteine + [E2 ubiquitin-conjugating enzyme]-L-cysteine = [E1 ubiquitin-activating enzyme]-L-cysteine + S-ubiquitinyl-[E2 ubiquitin-conjugating enzyme]-L-cysteine.. Its pathway is protein modification; protein ubiquitination. In terms of biological role, catalyzes the covalent attachment of ubiquitin to other proteins. Functions in degradation of misfolded or regulated proteins localized in the endoplasmic reticulum (ER) lumen or membrane via the ubiquitin-proteasome system. Cognate E2 conjugating enzyme for the DOA10 ubiquitin ligase complex, which is part of the ERAD-C pathway responsible for the rapid degradation of membrane proteins with misfolded cytoplasmic domains. The polypeptide is Ubiquitin-conjugating enzyme E2 6 (UBC6) (Candida glabrata (strain ATCC 2001 / BCRC 20586 / JCM 3761 / NBRC 0622 / NRRL Y-65 / CBS 138) (Yeast)).